A 469-amino-acid polypeptide reads, in one-letter code: Acetyl-CoA decarbonylase/synthase complex subunit beta 1 (469 aa).

4 residues coordinate [Ni-Fe-S] cluster: cysteine 189, cysteine 192, cysteine 278, and cysteine 280.

It belongs to the CdhC family. Monomer. The ACDS complex is made up of alpha, epsilon, beta, gamma and delta chains with a probable stoichiometry of (alpha(2)epsilon(2))(4)-beta(8)-(gamma(1)delta(1))(8) (Potential). Requires [Ni-Fe-S] cluster as cofactor.

It carries out the reaction Co(I)-[corrinoid Fe-S protein] + acetyl-CoA + H(+) = methyl-Co(III)-[corrinoid Fe-S protein] + CO + CoA. Its pathway is one-carbon metabolism; methanogenesis from acetate. In terms of biological role, part of a complex that catalyzes the reversible cleavage of acetyl-CoA, allowing growth on acetate as sole source of carbon and energy. The alpha-epsilon complex generates CO from CO(2), while the beta subunit (this protein) combines the CO with CoA and a methyl group to form acetyl-CoA. The methyl group, which is incorporated into acetyl-CoA, is transferred to the beta subunit by a corrinoid iron-sulfur protein (the gamma-delta complex). The polypeptide is Acetyl-CoA decarbonylase/synthase complex subunit beta 1 (cdhC1) (Methanosarcina acetivorans (strain ATCC 35395 / DSM 2834 / JCM 12185 / C2A)).